A 127-amino-acid polypeptide reads, in one-letter code: Histone H2B type 1-A (127 aa).

Proline 2 carries the N-acetylproline modification. Lysine 7, lysine 13, lysine 14, lysine 17, lysine 18, lysine 22, and lysine 25 each carry N6-acetyllysine; alternate. Residues lysine 7, lysine 13, lysine 14, lysine 17, lysine 18, lysine 22, lysine 25, and lysine 36 each carry the N6-crotonyllysine; alternate modification. N6-lactoyllysine; alternate is present on residues lysine 7 and lysine 13. Residue lysine 7 forms a Glycyl lysine isopeptide (Lys-Gly) (interchain with G-Cter in SUMO2); alternate linkage. Residues lysine 17, lysine 18, lysine 22, and lysine 25 each carry the N6-lactoyllysine; alternate modification. Lysine 22 participates in a covalent cross-link: Glycyl lysine isopeptide (Lys-Gly) (interchain with G-Cter in SUMO2); alternate. Residue lysine 36 is modified to N6-succinyllysine; alternate. Lysine 36 is covalently cross-linked (Glycyl lysine isopeptide (Lys-Gly) (interchain with G-Cter in ubiquitin); alternate). Residue serine 38 is modified to Phosphoserine. Lysine 45 is modified (N6-lactoyllysine; alternate). Position 48 is an N6-methyllysine (lysine 48). Residue lysine 59 is modified to N6,N6-dimethyllysine. Dimethylated arginine is present on arginine 81. An N6-acetyllysine; alternate modification is found at lysine 87. Lysine 87 bears the N6-lactoyllysine; alternate mark. Lysine 87 carries the N6,N6,N6-trimethyllysine; alternate modification. An omega-N-methylarginine mark is found at arginine 88 and arginine 94. Lysine 110 bears the N6-lactoyllysine; alternate mark. At lysine 110 the chain carries N6-methyllysine. Threonine 117 carries the post-translational modification Phosphothreonine. N6-lactoyllysine; alternate occurs at positions 118 and 122. 2 positions are modified to N6-succinyllysine; alternate: lysine 118 and lysine 122. Residue lysine 118 is modified to N6-methylated lysine; alternate. A Glycyl lysine isopeptide (Lys-Gly) (interchain with G-Cter in ubiquitin); alternate cross-link involves residue lysine 122.

The protein belongs to the histone H2B family. As to quaternary structure, the nucleosome is a histone octamer containing two molecules each of H2A, H2B, H3 and H4 assembled in one H3-H4 heterotetramer and two H2A-H2B heterodimers. Interacts with H2AB1; preferentially dimerizes with H2AB1 to form nucleosomes. Post-translationally, monoubiquitination at Lys-36 by the MSL1/MSL2 dimer is required for histone H3 'Lys-4' (H3K4me) and 'Lys-79' (H3K79me) methylation and transcription activation at specific gene loci, such as HOXA9 and MEIS1 loci. Similarly, monoubiquitination of Lys-122 (H2BK120Ub) by the RNF20/40 complex gives a specific tag for epigenetic transcriptional activation and is also prerequisite for histone H3 'Lys-4' and 'Lys-79' methylation. It also functions cooperatively with the FACT dimer to stimulate elongation by RNA polymerase II. H2BK120Ub also acts as a regulator of mRNA splicing: deubiquitination by USP49 is required for efficient cotranscriptional splicing of a large set of exons. In terms of processing, crotonylation (Kcr) is specifically present in male germ cells and marks testis-specific genes in post-meiotic cells, including X-linked genes that escape sex chromosome inactivation in haploid cells. Crotonylation marks active promoters and enhancers and confers resistance to transcriptional repressors. It is also associated with post-meiotically activated genes on autosomes. Acetylated during spermatogenesis. Acetylated form is most abundant in spermatogonia compared to spermatocytes and round spermatids. Post-translationally, phosphorylated at Thr-117 in spermatogonia, spermatocytes and round spermatids. In terms of processing, methylated at Lys-118 in spermatogonia, spermatocytes and round spermatids. Lactylated in macrophages by EP300/P300 by using lactoyl-CoA directly derived from endogenous or exogenous lactate, leading to stimulates gene transcription. Mainly expressed in testis, and the corresponding protein is also present in mature sperm. Also present in metaphase oocytes (at protein level).

The protein localises to the nucleus. Its subcellular location is the chromosome. Its function is as follows. Variant histone specifically required to direct the transformation of dissociating nucleosomes to protamine in male germ cells. Entirely replaces classical histone H2B prior nucleosome to protamine transition and probably acts as a nucleosome dissociating factor that creates a more dynamic chromatin, facilitating the large-scale exchange of histones. In condensing spermatids, the heterodimer between H2AB1 and H2BC1/TH2B is loaded onto the nucleosomes and promotes loading of transition proteins (TNP1 and TNP2) onto the nucleosomes. Inclusion of the H2AB1-H2BC1/TH2B dimer into chromatin opens the nucleosomes, releasing the nucleosomal DNA ends and allowing the invasion of nucleosomes by transition proteins (TNP1 and TNP2). Then, transition proteins drive the recruitment and processing of protamines, which are responsible for histone eviction. Also expressed maternally and is present in the female pronucleus, suggesting a similar role in protamine replacement by nucleosomes at fertilization. Core component of nucleosome. Nucleosomes wrap and compact DNA into chromatin, limiting DNA accessibility to the cellular machineries which require DNA as a template. Histones thereby play a central role in transcription regulation, DNA repair, DNA replication and chromosomal stability. DNA accessibility is regulated via a complex set of post-translational modifications of histones, also called histone code, and nucleosome remodeling. The chain is Histone H2B type 1-A from Mus musculus (Mouse).